A 354-amino-acid polypeptide reads, in one-letter code: Peripherin-2 (354 aa).

Residues 1–24 are Cytoplasmic-facing; the sequence is MALLKVKFNQKKRVKLAQGLWLMN. A helical membrane pass occupies residues 25-43; that stretch reads WFSVFAGIIVFSMGLFLKI. At 44–61 the chain is on the lumenal side; sequence ELRKRSEVMDNSESHFVP. Residues 62 to 80 form a helical membrane-spanning segment; that stretch reads NSLILMGILSCAFNGFAGK. The Cytoplasmic portion of the chain corresponds to 81–99; it reads ICYDSLDPAKFAKWKPLLK. The chain crosses the membrane as a helical span at residues 100–123; that stretch reads PYLALCFFFNILLFFVALICFLMR. The Lumenal segment spans residues 124 to 264; the sequence is GSLESTLAQG…LHYYSSMMSS (141 aa). An N-linked (GlcNAc...) asparagine glycan is attached at Asn-229. The chain crosses the membrane as a helical span at residues 265-290; it reads MGAVVLLVWLFEMSVMVGLRLLHTSL. Residues 291-354 are Cytoplasmic-facing; it reads ESIANPEDPE…GKTPAITTVS (64 aa). The disordered stretch occupies residues 335-354; sequence GAEGAEGEEAGKTPAITTVS.

The protein belongs to the PRPH2/ROM1 family. Homodimer; disulfide-linked.

Its subcellular location is the membrane. In terms of biological role, may be involved in the morphogenesis of retina outer segment disks and the development and maintenance of the retina ultrastructure. This Gallus gallus (Chicken) protein is Peripherin-2 (PRPH2).